The following is an 88-amino-acid chain: Cuticle protein 70, isoforms A and B (88 aa).

A run of 5 repeats spans residues 7 to 10 (AAPA), 48 to 51 (AAPA), 55 to 58 (AAVP), 60 to 63 (AAPV), and 66 to 69 (AAPV).

Functionally, component of the cuticle of migratory locust which contains more than 100 different structural proteins. The chain is Cuticle protein 70, isoforms A and B from Locusta migratoria (Migratory locust).